We begin with the raw amino-acid sequence, 261 residues long: Thiazole synthase (261 aa).

Catalysis depends on lysine 101, which acts as the Schiff-base intermediate with DXP. Residues glycine 162, 188 to 189, and 210 to 211 each bind 1-deoxy-D-xylulose 5-phosphate; these read AG and NT.

This sequence belongs to the ThiG family. As to quaternary structure, homotetramer. Forms heterodimers with either ThiH or ThiS.

It is found in the cytoplasm. It catalyses the reaction [ThiS sulfur-carrier protein]-C-terminal-Gly-aminoethanethioate + 2-iminoacetate + 1-deoxy-D-xylulose 5-phosphate = [ThiS sulfur-carrier protein]-C-terminal Gly-Gly + 2-[(2R,5Z)-2-carboxy-4-methylthiazol-5(2H)-ylidene]ethyl phosphate + 2 H2O + H(+). Its pathway is cofactor biosynthesis; thiamine diphosphate biosynthesis. Functionally, catalyzes the rearrangement of 1-deoxy-D-xylulose 5-phosphate (DXP) to produce the thiazole phosphate moiety of thiamine. Sulfur is provided by the thiocarboxylate moiety of the carrier protein ThiS. In vitro, sulfur can be provided by H(2)S. The sequence is that of Thiazole synthase from Aromatoleum aromaticum (strain DSM 19018 / LMG 30748 / EbN1) (Azoarcus sp. (strain EbN1)).